Here is a 621-residue protein sequence, read N- to C-terminus: Polycystin-2-like protein 2 (621 aa).

The Cytoplasmic portion of the chain corresponds to methionine 1–glutamate 31. Residues leucine 32–proline 52 traverse the membrane as a helical segment. Over histidine 53–tyrosine 277 the chain is Extracellular. Asparagine 115 and asparagine 138 each carry an N-linked (GlcNAc...) asparagine glycan. The helical transmembrane segment at tyrosine 278–isoleucine 298 threads the bilayer. At glutamine 299–serine 314 the chain is on the cytoplasmic side. A helical membrane pass occupies residues valine 315–alanine 335. Residues tyrosine 336 to phenylalanine 360 lie on the Extracellular side of the membrane. Residues leucine 361–isoleucine 381 traverse the membrane as a helical segment. Topologically, residues lysine 382–aspartate 406 are cytoplasmic. The helical transmembrane segment at isoleucine 407 to leucine 427 threads the bilayer. The Extracellular portion of the chain corresponds to valine 428–proline 468. Residues isoleucine 469 to isoleucine 489 form a helical membrane-spanning segment. At isoleucine 490–histidine 621 the chain is on the cytoplasmic side. A coiled-coil region spans residues asparagine 521 to aspartate 551.

The protein belongs to the polycystin family. In terms of assembly, interacts with TRPC1 and TRPC5. As to expression, expressed only in testis and heart.

It localises to the membrane. In terms of biological role, exhibits a lower single conductance but no spontaneous channel activity. May function as a regulator of calcium channels or a channel component involving Ca2(+) homeostasis. This is Polycystin-2-like protein 2 from Mus musculus (Mouse).